An 831-amino-acid polypeptide reads, in one-letter code: Sodium/hydrogen exchanger 3 (831 aa).

Positions 1–28 are cleaved as a signal peptide; that stretch reads MWHPALGPGWKPLLALALALTSLRGVRG. Residues 29–48 lie on the Extracellular side of the membrane; sequence IEEEPNSGGSFQIVTFKWHH. The chain crosses the membrane as a helical span at residues 49 to 71; it reads VQDPYIIALWILVASLAKIVFHL. Topologically, residues 72–79 are cytoplasmic; sequence SHKVTSVV. Residues 80–99 form a helical membrane-spanning segment; sequence PESALLIVLGLVLGGIVWAA. The Extracellular portion of the chain corresponds to 100 to 108; it reads DHIASFTLT. The chain crosses the membrane as a helical span at residues 109 to 126; that stretch reads PTLFFFYLLPPIVLDAGY. The Cytoplasmic segment spans residues 127–129; sequence FMP. A helical membrane pass occupies residues 130-165; sequence NRLFFGNLGTILLYAVIGTIWNAATTGLSLYGVFLS. Gly135, Gly138, and Thr139 together coordinate a 1,2-diacyl-sn-glycero-3-phospho-(1D-myo-inositol). The Extracellular segment spans residues 166–178; the sequence is GLMGELKIGLLDF. A helical membrane pass occupies residues 179–200; the sequence is LLFGSLIAAVDPVAVLAVFEEV. Residues 201 to 202 are Cytoplasmic-facing; sequence HV. A helical transmembrane segment spans residues 203-234; it reads NEVLFIIVFGESLLNDAVTVVLYNVFESFVTL. The Extracellular portion of the chain corresponds to 235–241; it reads GGDAVTG. Residues 242-276 traverse the membrane as a helical segment; the sequence is VDCVKGIVSFFVVSLGGTLVGVIFAFLLSLVTRFT. Residues 277-278 are Cytoplasmic-facing; that stretch reads KH. A helical membrane pass occupies residues 279–301; it reads VRIIEPGFVFVISYLSYLTSEML. The Extracellular portion of the chain corresponds to 302–303; the sequence is SL. Residues 304–320 traverse the membrane as a helical segment; the sequence is SAILAITFCGICCQKYV. Over 321 to 327 the chain is Cytoplasmic; the sequence is KANISEQ. Residues 328–356 form a helical membrane-spanning segment; the sequence is SATTVRYTMKMLASGAETIIFMFLGISAV. The Extracellular segment spans residues 357–364; it reads DPVIWTWN. Residues 365–386 form a helical membrane-spanning segment; the sequence is TAFVLLTLVFISVYRAIGVVLQ. The Cytoplasmic segment spans residues 387–399; that stretch reads TWILNRYRMVQLE. Residue Met395 participates in a 1,2-diacyl-sn-glycero-3-phospho-(1D-myo-inositol) binding. The chain crosses the membrane as a helical span at residues 400 to 423; it reads TIDQVVMSYGGLRGAVAYALVVLL. The Extracellular segment spans residues 424 to 430; sequence DEKKVKE. A helical membrane pass occupies residues 431–464; sequence KNLFVSTTLIVVFFTVIFQGLTIKPLVQWLKVKR. Topologically, residues 465-831 are cytoplasmic; sequence SEQREPKLNE…QPASPESTHM (367 aa). Residues Gln494, Ile495, and His497 each contribute to the a 1,2-diacyl-sn-glycero-3-phospho-(1D-myo-inositol) site. Residues Ser552 and Ser560 each carry the phosphoserine modification. Residues 573-587 form an interaction with EZR region; it reads RPSTVEASVSYFLRE. Positions 588–665 are interaction with NHERF4; it reads NVSAVCLDMQ…RKRLESFKSA (78 aa). Residues 589–693 form an interaction with AHCYL1 region; sequence VSAVCLDMQS…AQKRRNSSIP (105 aa). A phosphoserine mark is found at Ser590 and Ser605. Phosphoserine; by SGK1 is present on Ser661. Phosphoserine occurs at positions 716, 807, and 810. Positions 808–831 are disordered; that stretch reads VDSFLQADGPEEQLQPASPESTHM. A compositionally biased stretch (polar residues) spans 822–831; it reads QPASPESTHM.

The protein belongs to the monovalent cation:p,roton antiporter 1 (CPA1) transporter (TC 2.A.36) family. As to quaternary structure, homodimer. Found in the forms of complex and dynamic macromolecular complexes. Binds NHERF1 and NHERF2. Interacts with NHERF4 and interactions decrease in response to elevated calcium ion levels. Interacts with PDZK1 (via C-terminal PDZ domain). Interacts with CHP1; this interaction increases trafficking and activity at the plasma membrane of SLC9A3. Interacts with CHP2 and SHANK2. Interacts with AHCYL1; the interaction is required for SLC9A3 activity. Interacts with EZR; interaction targets SLC9A3 to the apical membrane. Interacts with SNX27 (via PDZ domains); directs SLC9A3 membrane insertion from early endosomes to the plasma membrane. In terms of processing, phosphorylated by PRKACA at Ser-552 and Ser-605, which inhibits activity. Phosphorylation of Ser-605 is essential for cAMP-mediated inhibition of SLC9A3. Phosphorylation at Ser-661 by SGK1 is associated with increased abundance at the cell membrane. Phosphorylation at Ser-716 by CSNK2A1 regulates SLC9A3 activity through the formation of multiple signaling complexes. As to expression, most abundant in colon and small intestine, followed by kidney and stomach. In kidney, expressed in proximal tubules and outer medulla (at protein level).

The protein resides in the apical cell membrane. Its subcellular location is the cell membrane. It is found in the recycling endosome membrane. It localises to the early endosome membrane. It catalyses the reaction Na(+)(in) + H(+)(out) = Na(+)(out) + H(+)(in). With respect to regulation, seems to switch between active and inactive modes in response to various stimuli. Activated directly or indirectly by membrane phosphatidylinositol (PIs). Regulated by a variety of auxiliary proteins, which facilitate the maturation, cell surface expression and function of the transporter. Inhibited specifically by the drug tenapanor. In terms of biological role, plasma membrane Na(+)/H(+) antiporter. Exchanges intracellular H(+) ions for extracellular Na(+) in 1:1 stoichiometry, playing a key role in salt and fluid absorption and pH homeostasis. Major apical Na(+)/H(+) exchanger in kidney and intestine playing an important role in renal and intestine Na(+) absorption and blood pressure regulation. The polypeptide is Sodium/hydrogen exchanger 3 (Slc9a3) (Rattus norvegicus (Rat)).